Here is a 370-residue protein sequence, read N- to C-terminus: Chorismate synthase (370 aa).

2 residues coordinate NADP(+): R48 and R54. Residues 130–132 (RSS), 242–243 (NA), G287, 302–306 (KPTSS), and R328 contribute to the FMN site.

It belongs to the chorismate synthase family. Homotetramer. The cofactor is FMNH2.

It catalyses the reaction 5-O-(1-carboxyvinyl)-3-phosphoshikimate = chorismate + phosphate. The protein operates within metabolic intermediate biosynthesis; chorismate biosynthesis; chorismate from D-erythrose 4-phosphate and phosphoenolpyruvate: step 7/7. Catalyzes the anti-1,4-elimination of the C-3 phosphate and the C-6 proR hydrogen from 5-enolpyruvylshikimate-3-phosphate (EPSP) to yield chorismate, which is the branch point compound that serves as the starting substrate for the three terminal pathways of aromatic amino acid biosynthesis. This reaction introduces a second double bond into the aromatic ring system. The sequence is that of Chorismate synthase from Xanthobacter autotrophicus (strain ATCC BAA-1158 / Py2).